Reading from the N-terminus, the 528-residue chain is MAGSDTAPFLSQADDPDDGPVPGTPGLPGSTGNPKSEEPEVPDQEGLQRITGLSPGRSALIVAVLCYINLLNYMDRFTVAGVLPDIEQFFNIGDSSSGLIQTVFISSYMVLAPVFGYLGDRYNRKYLMCGGIAFWSLVTLGSSFIPGEHFWLLLLTRGLVGVGEASYSTIAPTLIADLFVADQRSRMLSIFYFAIPVGSGLGYIAGSKVKDMAGDWHWALRVTPGLGVVAVLLLFLVVREPPRGAVERHSDLPPLNPTSWWADLRALARNPSFVLSSLGFTAVAFVTGSLALWAPAFLLRSRVVLGETPPCLPGDSCSSSDSLIFGLITCLTGVLGVGLGVEISRRLRHSNPRADPLVCATGLLGSAPFLFLSLACARGSIVATYIFIFIGETLLSMNWAIVADILLYVVIPTRRSTAEAFQIVLSHLLGDAGSPYLIGLISDRLRRNWPPSFLSEFRALQFSLMLCAFVGALGGAAFLGTAIFIEADRRRAQLHVQGLLHEAGSTDDRIVVPQRGRSTRVPVASVLI.

The segment at 1–49 (MAGSDTAPFLSQADDPDDGPVPGTPGLPGSTGNPKSEEPEVPDQEGLQR) is disordered. At Ala-2 the chain carries N-acetylalanine. 12 helical membrane-spanning segments follow: residues 50–70 (ITGL…YINL), 98–118 (GLIQ…FGYL), 127–147 (LMCG…FIPG), 160–180 (VGVG…DLFV), 187–207 (MLSI…IAGS), 218–238 (WALR…FLVV), 278–298 (LGFT…PAFL), 323–343 (LIFG…GVEI), 357–377 (LVCA…LACA), 381–401 (IVAT…NWAI), 421–441 (FQIV…IGLI), and 465–485 (MLCA…AIFI). Ser-518 is modified (phosphoserine).

The protein belongs to the major facilitator superfamily. Spinster (TC 2.A.1.49) family. Interacts with BCL2 and BCL2L1.

It localises to the lysosome membrane. The protein localises to the mitochondrion inner membrane. It catalyses the reaction a 1-acyl-sn-glycero-3-phosphocholine(out) + H(+)(out) = a 1-acyl-sn-glycero-3-phosphocholine(in) + H(+)(in). The catalysed reaction is 1-hexadecanoyl-sn-glycero-3-phosphocholine(out) + H(+)(out) = 1-hexadecanoyl-sn-glycero-3-phosphocholine(in) + H(+)(in). The enzyme catalyses 1-(9Z-octadecenoyl)-sn-glycero-3-phosphocholine(out) + H(+)(out) = 1-(9Z-octadecenoyl)-sn-glycero-3-phosphocholine(in) + H(+)(in). It carries out the reaction 1-(5Z,8Z,11Z,14Z-eicosatetraenoyl)-sn-glycero-3-phosphocholine(out) + H(+)(out) = 1-(5Z,8Z,11Z,14Z-eicosatetraenoyl)-sn-glycero-3-phosphocholine(in) + H(+)(in). It catalyses the reaction 1-(4Z,7Z,10Z,13Z,16Z,19Z-docosahexaenoyl)-sn-glycero-3-phosphocholine(out) + H(+)(out) = 1-(4Z,7Z,10Z,13Z,16Z,19Z-docosahexaenoyl)-sn-glycero-3-phosphocholine(in) + H(+)(in). The catalysed reaction is a 1-acyl-sn-glycero-3-phosphoethanolamine(out) + H(+)(out) = a 1-acyl-sn-glycero-3-phosphoethanolamine(in) + H(+)(in). The enzyme catalyses 1-(9Z-octadecenoyl)-sn-glycero-3-phosphoethanolamine(out) + H(+)(out) = 1-(9Z-octadecenoyl)-sn-glycero-3-phosphoethanolamine(in) + H(+)(in). It carries out the reaction 1-acyl-sn-glycero-3-phospho-(1'-sn-glycerol)(out) + H(+)(out) = 1-acyl-sn-glycero-3-phospho-(1'-sn-glycerol)(in) + H(+)(in). It catalyses the reaction 1-(9Z-octadecenoyl)-sn-glycero-3-phospho-(1'-sn-glycerol)(out) + H(+)(out) = 1-(9Z-octadecenoyl)-sn-glycero-3-phospho-(1'-sn-glycerol)(in) + H(+)(in). The catalysed reaction is a 1-O-(1Z-alkenyl)-sn-glycero-3-phosphocholine(out) + H(+)(out) = a 1-O-(1Z-alkenyl)-sn-glycero-3-phosphocholine(in) + H(+)(in). The enzyme catalyses 1-(1Z-hexadecenyl)-sn-glycero-3-phosphocholine(out) + H(+)(out) = 1-(1Z-hexadecenyl)-sn-glycero-3-phosphocholine(in) + H(+)(in). It carries out the reaction a 1-O-(1Z-alkenyl)-sn-glycero-3-phosphoethanolamine(out) + H(+)(out) = a 1-O-(1Z-alkenyl)-sn-glycero-3-phosphoethanolamine(in) + H(+)(in). It catalyses the reaction 1-O-(1Z-hexadecenyl)-sn-glycero-3-phosphoethanolamine(out) + H(+)(out) = 1-O-(1Z-hexadecenyl)-sn-glycero-3-phosphoethanolamine(in) + H(+)(in). Functionally, plays a critical role in the phospholipid salvage pathway from lysosomes to the cytosol. Mediates the rate-limiting, proton-dependent, lysosomal efflux of lysophospholipids, which can then be reacylated by acyltransferases in the endoplasmic reticulum to form phospholipids. Selective for zwitterionic headgroups such as lysophosphatidylcholine (LPC) and lysophosphatidylethanolamine (LPE), can also transport lysophosphatidylglycerol (LPG), but not other anionic lysophospholipids, sphingosine, nor sphingomyelin. Transports lysophospholipids with saturated, monounsaturated, and polyunsaturated fatty acids, such as 1-hexadecanoyl-sn-glycero-3-phosphocholine, 1-(9Z-octadecenoyl)-sn-glycero-3-phosphocholine and 1-(4Z,7Z,10Z,13Z,16Z,19Z-docosahexaenoyl)-sn-glycero-3-phosphocholine, respectively. Can also transport lysoplasmalogen (LPC with a fatty alcohol) such as 1-(1Z-hexadecenyl)-sn-glycero-3-phosphocholine. Lysosomal LPC could function as intracellular signaling messenger. Essential player in lysosomal homeostasis. Crucial for cell survival under conditions of nutrient limitation. May be involved in necrotic or autophagic cell death. This chain is Protein spinster homolog 1 (SPNS1), found in Homo sapiens (Human).